The primary structure comprises 256 residues: Small ribosomal subunit protein eS1 (256 aa).

Over residues 1 to 18 (MAVGKNKRLSKGKKGIKK) the composition is skewed to basic residues. Residues 1 to 20 (MAVGKNKRLSKGKKGIKKRT) are disordered. At A2 the chain carries N-acetylalanine; partial.

It belongs to the eukaryotic ribosomal protein eS1 family. In terms of assembly, component of the small ribosomal subunit. Mature ribosomes consist of a small (40S) and a large (60S) subunit. The 40S subunit contains about 33 different proteins and 1 molecule of RNA (18S). The 60S subunit contains about 49 different proteins and 3 molecules of RNA (25S, 5.8S and 5S).

Its subcellular location is the cytoplasm. This is Small ribosomal subunit protein eS1 (rps1) from Aspergillus flavus (strain ATCC 200026 / FGSC A1120 / IAM 13836 / NRRL 3357 / JCM 12722 / SRRC 167).